The chain runs to 381 residues: F-box/LRR-repeat protein At4g14103 (381 aa).

Positions 7–60 (RDVISSLPDDISSHILSFLPTKEAASTSVLSKKWRYLFAFVPNLDLDDSVYLNP) constitute an F-box domain. LRR repeat units lie at residues 118-146 (DLHL…KLRF), 171-196 (HFEE…VLDD), 218-243 (SWQE…KFTD), 249-274 (YPKV…LINY), 299-330 (TLYL…TIES), and 331-356 (NPRV…IFQG).

In Arabidopsis thaliana (Mouse-ear cress), this protein is F-box/LRR-repeat protein At4g14103.